The chain runs to 446 residues: Phosphoglucosamine mutase (446 aa).

The Phosphoserine intermediate role is filled by serine 101. The Mg(2+) site is built by serine 101, aspartate 240, aspartate 242, and aspartate 244. The residue at position 101 (serine 101) is a Phosphoserine.

Belongs to the phosphohexose mutase family. Requires Mg(2+) as cofactor. In terms of processing, activated by phosphorylation.

The catalysed reaction is alpha-D-glucosamine 1-phosphate = D-glucosamine 6-phosphate. Its function is as follows. Catalyzes the conversion of glucosamine-6-phosphate to glucosamine-1-phosphate. The protein is Phosphoglucosamine mutase of Pseudomonas entomophila (strain L48).